The following is a 325-amino-acid chain: ADP-ribose glycohydrolase MACROD1 (325 aa).

An N6-succinyllysine mark is found at lysine 96, lysine 103, and lysine 129. Lysine 138 participates in a covalent cross-link: Glycyl lysine isopeptide (Lys-Gly) (interchain with G-Cter in SUMO2). The Macro domain occupies 141–322 (EPRYKKDKQL…IYRSRLPHYF (182 aa)). 159 to 161 (SDI) is a substrate binding site. Residue lysine 163 is modified to N6-acetyllysine. Residues 172–174 (AAN), 179–184 (GGGGVD), 267–273 (ISTGVFG), and phenylalanine 306 each bind substrate.

It belongs to the MacroD-type family. MacroD1/2-like subfamily. Interacts with ESR1; Interacts in a manner that is estrogen independent but is enhanced by estrogen. Interacts (via macro domain) with AR.

The protein resides in the nucleus. The catalysed reaction is 3''-O-acetyl-ADP-D-ribose + H2O = ADP-D-ribose + acetate + H(+). The enzyme catalyses 2''-O-acetyl-ADP-D-ribose + H2O = ADP-D-ribose + acetate + H(+). It catalyses the reaction 4-O-(ADP-D-ribosyl)-L-aspartyl-[protein] + H2O = L-aspartyl-[protein] + ADP-D-ribose + H(+). It carries out the reaction 5-O-(ADP-D-ribosyl)-L-glutamyl-[protein] + H2O = L-glutamyl-[protein] + ADP-D-ribose + H(+). The catalysed reaction is alpha-NAD(+) + H2O = ADP-D-ribose + nicotinamide + H(+). With respect to regulation, subject to competitive inhibition by the product ADP-ribose. Functionally, removes ADP-ribose from aspartate and glutamate residues in proteins bearing a single ADP-ribose moiety. Inactive towards proteins bearing poly-ADP-ribose. Deacetylates O-acetyl-ADP ribose, a signaling molecule generated by the deacetylation of acetylated lysine residues in histones and other proteins. Plays a role in estrogen signaling. Binds to androgen receptor (AR) and amplifies the transactivation function of AR in response to androgen. May play an important role in carcinogenesis and/or progression of hormone-dependent cancers by feed-forward mechanism that activates ESR1 transactivation. Could be an ESR1 coactivator, providing a positive feedback regulatory loop for ESR1 signal transduction. Could be involved in invasive growth by down-regulating CDH1 in endometrial cancer cells. Enhances ESR1-mediated transcription activity. In Homo sapiens (Human), this protein is ADP-ribose glycohydrolase MACROD1.